We begin with the raw amino-acid sequence, 273 residues long: 4-hydroxy-tetrahydrodipicolinate reductase (273 aa).

NAD(+) contacts are provided by residues 12–17 and E38; that span reads GAGGRM. R39 lines the NADP(+) pocket. NAD(+) is bound by residues 102–104 and 126–129; these read GTT and AANF. The active-site Proton donor/acceptor is the H159. H160 is a (S)-2,3,4,5-tetrahydrodipicolinate binding site. K163 acts as the Proton donor in catalysis. 169–170 is a (S)-2,3,4,5-tetrahydrodipicolinate binding site; the sequence is GT.

It belongs to the DapB family. Homotetramer.

The protein localises to the cytoplasm. It catalyses the reaction (S)-2,3,4,5-tetrahydrodipicolinate + NAD(+) + H2O = (2S,4S)-4-hydroxy-2,3,4,5-tetrahydrodipicolinate + NADH + H(+). The catalysed reaction is (S)-2,3,4,5-tetrahydrodipicolinate + NADP(+) + H2O = (2S,4S)-4-hydroxy-2,3,4,5-tetrahydrodipicolinate + NADPH + H(+). The protein operates within amino-acid biosynthesis; L-lysine biosynthesis via DAP pathway; (S)-tetrahydrodipicolinate from L-aspartate: step 4/4. Its function is as follows. Catalyzes the conversion of 4-hydroxy-tetrahydrodipicolinate (HTPA) to tetrahydrodipicolinate. This is 4-hydroxy-tetrahydrodipicolinate reductase from Yersinia pestis bv. Antiqua (strain Antiqua).